The sequence spans 230 residues: Urease accessory protein UreE (230 aa).

Composition is skewed to basic and acidic residues over residues 182 to 193 (HVHVDSPLDEPH) and 204 to 230 (SHGD…DHKH). Residues 182–230 (HVHVDSPLDEPHGSGLHVHAIHSHGDGHSHSHSHDHDHDHRHDDHDHKH) are disordered.

Belongs to the UreE family.

It localises to the cytoplasm. In terms of biological role, involved in urease metallocenter assembly. Binds nickel. Probably functions as a nickel donor during metallocenter assembly. This is Urease accessory protein UreE from Yersinia mollaretii.